Reading from the N-terminus, the 279-residue chain is Movement protein (279 aa).

A disordered region spans residues 246–279 (SESEELNVESPPAAIGSSSASRSEAFRPQVVNGL). The segment covering 254-268 (ESPPAAIGSSSASRS) has biased composition (low complexity).

The protein belongs to the cucumovirus movement protein family.

The protein localises to the host cell junction. It is found in the host plasmodesma. In terms of biological role, transports viral genome to neighboring plant cells directly through plasmosdesmata, without any budding. The movement protein allows efficient cell to cell propagation, by bypassing the host cell wall barrier. Acts by forming a tubular structure at the host plasmodesmata, enlarging it enough to allow free passage of virion capsids. The sequence is that of Movement protein from Cucumis sativus (Cucumber).